Reading from the N-terminus, the 327-residue chain is L-lactate dehydrogenase (327 aa).

Residues Val-18, Asp-39, Lys-44, Tyr-69, and 83-84 (GA) each bind NAD(+). Substrate is bound by residues Gln-86, Arg-92, and 124–127 (NPVD). Residues 122-124 (AAN) and Ser-147 each bind NAD(+). 152–155 (DSAR) is a substrate binding site. Residues Arg-157 and His-172 each coordinate beta-D-fructose 1,6-bisphosphate. The Proton acceptor role is filled by His-179. Tyr-224 is modified (phosphotyrosine). Residue Thr-233 coordinates substrate.

Belongs to the LDH/MDH superfamily. LDH family. In terms of assembly, homotetramer.

It is found in the cytoplasm. It catalyses the reaction (S)-lactate + NAD(+) = pyruvate + NADH + H(+). The protein operates within fermentation; pyruvate fermentation to lactate; (S)-lactate from pyruvate: step 1/1. Allosterically activated by fructose 1,6-bisphosphate (FBP). In terms of biological role, catalyzes the conversion of lactate to pyruvate. The chain is L-lactate dehydrogenase from Streptococcus equi subsp. equi (strain 4047).